The chain runs to 139 residues: ATP synthase epsilon chain, chloroplastic (139 aa).

The protein belongs to the ATPase epsilon chain family. As to quaternary structure, F-type ATPases have 2 components, CF(1) - the catalytic core - and CF(0) - the membrane proton channel. CF(1) has five subunits: alpha(3), beta(3), gamma(1), delta(1), epsilon(1). CF(0) has three main subunits: a, b and c.

Its subcellular location is the plastid. The protein localises to the chloroplast thylakoid membrane. Functionally, produces ATP from ADP in the presence of a proton gradient across the membrane. This chain is ATP synthase epsilon chain, chloroplastic, found in Welwitschia mirabilis (Tree tumbo).